A 133-amino-acid chain; its full sequence is Large ribosomal subunit protein uL22 (133 aa).

It belongs to the universal ribosomal protein uL22 family. In terms of assembly, part of the 50S ribosomal subunit.

Functionally, this protein binds specifically to 23S rRNA; its binding is stimulated by other ribosomal proteins, e.g. L4, L17, and L20. It is important during the early stages of 50S assembly. It makes multiple contacts with different domains of the 23S rRNA in the assembled 50S subunit and ribosome. The globular domain of the protein is located near the polypeptide exit tunnel on the outside of the subunit, while an extended beta-hairpin is found that lines the wall of the exit tunnel in the center of the 70S ribosome. The polypeptide is Large ribosomal subunit protein uL22 (Aquifex aeolicus (strain VF5)).